We begin with the raw amino-acid sequence, 217 residues long: Large ribosomal subunit protein uL3 (217 aa).

Belongs to the universal ribosomal protein uL3 family. Part of the 50S ribosomal subunit. Forms a cluster with proteins L14 and L19.

In terms of biological role, one of the primary rRNA binding proteins, it binds directly near the 3'-end of the 23S rRNA, where it nucleates assembly of the 50S subunit. This is Large ribosomal subunit protein uL3 from Mycobacterium bovis (strain ATCC BAA-935 / AF2122/97).